The following is a 102-amino-acid chain: Secretoglobin family 1D member (102 aa).

The N-terminal stretch at 1 to 21 (MRLSVTALLVTLALCYYEANA) is a signal peptide. The N-linked (GlcNAc...) asparagine glycan is linked to Asn87.

It belongs to the secretoglobin family. Lipophilin subfamily.

Its subcellular location is the secreted. Its function is as follows. May bind androgens and other steroids. May be under transcriptional regulation of steroid hormones. This is Secretoglobin family 1D member (SCGB1D) from Bos taurus (Bovine).